Here is a 231-residue protein sequence, read N- to C-terminus: Quercetin 2,3-dioxygenase (231 aa).

A divalent metal cation-binding residues include His-57, His-59, His-101, and Glu-103.

It belongs to the pirin family. The cofactor is Zn(2+). It depends on Co(2+) as a cofactor. Requires Fe(2+) as cofactor.

It carries out the reaction quercetin + O2 = 2-(3,4-dihydroxybenzoyloxy)-4,6-dihydroxybenzoate + CO. Its pathway is flavonoid metabolism; quercetin degradation. Its function is as follows. Has quercetin 2,3-dioxygenase activity in vitro. Its physiological role is unknown; however, may provide a mechanism that would avoid inhibition of key cellular proteins, such as DNA gyrase, by quercetin. The chain is Quercetin 2,3-dioxygenase (yhhW) from Escherichia coli O157:H7.